Here is a 108-residue protein sequence, read N- to C-terminus: Ig kappa chain V-V region HP 124E1 (108 aa).

A framework-1 region spans residues 1 to 23 (DIQMTQTTSSLSASLGDRVTISC). Cysteine 23 and cysteine 88 form a disulfide bridge. The interval 24-34 (RASQDINNYLN) is complementarity-determining-1. Residues 35-49 (WYQQKPDGTVKLLIY) form a framework-2 region. Residues 50-56 (YTSRLHS) form a complementarity-determining-2 region. A framework-3 region spans residues 57–88 (GVPSRFSGSGSGTDYSLTISNLEQEDIATYFC). Positions 89–97 (QQGKTLPRT) are complementarity-determining-3. Positions 98-108 (FGGGTKLEIKR) are framework-4.

The polypeptide is Ig kappa chain V-V region HP 124E1 (Mus musculus (Mouse)).